The primary structure comprises 89 residues: UPF0223 protein BCB4264_A4064 (89 aa).

The protein belongs to the UPF0223 family.

The chain is UPF0223 protein BCB4264_A4064 from Bacillus cereus (strain B4264).